Consider the following 140-residue polypeptide: Nucleoside diphosphate kinase (140 aa).

Residues K11, F59, R87, T93, R104, and N114 each coordinate ATP. The active-site Pros-phosphohistidine intermediate is H117.

Belongs to the NDK family. As to quaternary structure, homotetramer. Mg(2+) serves as cofactor.

The protein localises to the cytoplasm. It carries out the reaction a 2'-deoxyribonucleoside 5'-diphosphate + ATP = a 2'-deoxyribonucleoside 5'-triphosphate + ADP. The enzyme catalyses a ribonucleoside 5'-diphosphate + ATP = a ribonucleoside 5'-triphosphate + ADP. Functionally, major role in the synthesis of nucleoside triphosphates other than ATP. The ATP gamma phosphate is transferred to the NDP beta phosphate via a ping-pong mechanism, using a phosphorylated active-site intermediate. The protein is Nucleoside diphosphate kinase of Cereibacter sphaeroides (strain ATCC 17025 / ATH 2.4.3) (Rhodobacter sphaeroides).